The primary structure comprises 435 residues: UDP-N-acetylmuramate--L-alanine ligase (435 aa).

108 to 114 serves as a coordination point for ATP; sequence GSHGKTS.

The protein belongs to the MurCDEF family.

The protein resides in the cytoplasm. It carries out the reaction UDP-N-acetyl-alpha-D-muramate + L-alanine + ATP = UDP-N-acetyl-alpha-D-muramoyl-L-alanine + ADP + phosphate + H(+). The protein operates within cell wall biogenesis; peptidoglycan biosynthesis. Cell wall formation. This Exiguobacterium sp. (strain ATCC BAA-1283 / AT1b) protein is UDP-N-acetylmuramate--L-alanine ligase.